A 92-amino-acid polypeptide reads, in one-letter code: MKMKKTNIKMHVKRGETVQIISGREKGKIGKIIKVLPKSSQVIIDNLNIATKHLKAQKEGDSGQIIRIEKPIHSSNVIQYKLDSNTSIKDRV.

This sequence belongs to the universal ribosomal protein uL24 family. Part of the 50S ribosomal subunit.

The protein resides in the plastid. Its subcellular location is the chloroplast. In terms of biological role, one of two assembly initiator proteins, it binds directly to the 5'-end of the 23S rRNA, where it nucleates assembly of the 50S subunit. This is Large ribosomal subunit protein uL24c (rpl24) from Gracilaria tenuistipitata var. liui (Red alga).